The sequence spans 430 residues: Probable sulfoacetate transporter SauU (430 aa).

The next 10 helical transmembrane spans lie at 47–67 (LGLVFSAFAYPYAAMQILGGW), 83–103 (LIWGVATVLTGFAGSVLILVV), 142–162 (FARLGGAITPPVVLVIVAAAG), 165–185 (EAFIVLGAVSLGWTLLYAFFF), 228–248 (WLVTFVDFCYGWSLWVYLTWL), 263–283 (LALFTALPLMAGVVGDTLGGV), 301–321 (AVLFVGLAGSLMFIAPMTFTA), 327–347 (VILLSLSFFFLELTNAVLWSL), 362–382 (MMNTGFGVAGMVSPVVFGYLI), and 390–410 (LPFMISGALLGVGALASLFIN).

This sequence belongs to the major facilitator superfamily.

Its subcellular location is the cell membrane. May transport sulfoacetate into the cell. The protein is Probable sulfoacetate transporter SauU (sauU) of Cupriavidus necator (strain ATCC 17699 / DSM 428 / KCTC 22496 / NCIMB 10442 / H16 / Stanier 337) (Ralstonia eutropha).